Consider the following 626-residue polypeptide: (+)-3-carene synthase 1, chloroplastic (626 aa).

A chloroplast-targeting transit peptide spans 1–45 (MSLISAVPLASSCVSKSLISSVREHKALRRAIATLQMSRPGKSVA). Mg(2+)-binding residues include Asp-377, Asp-381, and Asp-529. The DDXXD motif motif lies at 377 to 381 (DDMYD).

It belongs to the terpene synthase family. Tpsd subfamily. Requires Mg(2+) as cofactor. The cofactor is Mn(2+).

It is found in the plastid. The protein localises to the chloroplast. It catalyses the reaction (2E)-geranyl diphosphate = (+)-car-3-ene + diphosphate. The catalysed reaction is (2E)-geranyl diphosphate = terpinolene + diphosphate. Its pathway is terpene metabolism; oleoresin biosynthesis. It participates in secondary metabolite biosynthesis; terpenoid biosynthesis. Its function is as follows. Monoterpene synthase (TPS) involved in the biosynthesis of monoterpene natural products included in conifer oleoresin secretions and volatile emissions; these compounds contribute to biotic and abiotic stress defense against herbivores and pathogens. Catalyzes the conversion of (2E)-geranyl diphosphate (GPP) to (+)-3-carene and, to a lower extent, to terpinolene. The sequence is that of (+)-3-carene synthase 1, chloroplastic from Pinus banksiana (Jack pine).